Reading from the N-terminus, the 365-residue chain is Probable L-tyrosine/L-aspartate decarboxylase (365 aa).

Position 224 is an N6-(pyridoxal phosphate)lysine (Lys224).

It belongs to the group II decarboxylase family. MfnA subfamily. Pyridoxal 5'-phosphate serves as cofactor.

The enzyme catalyses L-tyrosine + H(+) = tyramine + CO2. It carries out the reaction L-aspartate + H(+) = beta-alanine + CO2. It participates in cofactor biosynthesis; methanofuran biosynthesis. It functions in the pathway cofactor biosynthesis; coenzyme A biosynthesis. In terms of biological role, catalyzes the decarboxylation of L-tyrosine to produce tyramine for methanofuran biosynthesis. Can also catalyze the decarboxylation of L-aspartate to produce beta-alanine for coenzyme A (CoA) biosynthesis. This is Probable L-tyrosine/L-aspartate decarboxylase from Methanoculleus marisnigri (strain ATCC 35101 / DSM 1498 / JR1).